A 248-amino-acid polypeptide reads, in one-letter code: Ras-like protein family member 11B (248 aa).

The small GTPase-like stretch occupies residues 30-248; it reads ASSRVIKIAV…SSKVRTATSV (219 aa). GTP contacts are provided by residues 41–48, 88–99, and 153–156; these read GGSGVGKT, DTPGVQINEQNL, and NKAD. The segment at 206–228 is disordered; sequence QNTGTSERRKNSIIPRPKSPNMQ.

Belongs to the small GTPase superfamily. Ras family.

The catalysed reaction is GTP + H2O = GDP + phosphate + H(+). The chain is Ras-like protein family member 11B from Xenopus laevis (African clawed frog).